The following is a 465-amino-acid chain: Cerebellar degeneration-related protein 2-like (465 aa).

2 coiled-coil regions span residues 38–143 (LLER…EQLR) and 188–265 (LEQE…TYLL). The interval 282 to 314 (APEADDPQPGRGDDLGAQDGVSSPAASPGHVVR) is disordered. Residues Ser308, Ser318, and Ser344 each carry the phosphoserine modification. Residues 350 to 377 (MSILREVDEQYHALLEKYEELLSKCRQH) adopt a coiled-coil conformation. Residues 382 to 417 (RHAGVQTSRPISRDSSWRDLRGGEEGQGEVKAGEKS) are disordered. Positions 392-405 (ISRDSSWRDLRGGE) are enriched in basic and acidic residues.

This sequence belongs to the CDR2 family.

The sequence is that of Cerebellar degeneration-related protein 2-like (CDR2L) from Homo sapiens (Human).